Consider the following 156-residue polypeptide: Small ribosomal subunit protein uS7 (156 aa).

Belongs to the universal ribosomal protein uS7 family. Part of the 30S ribosomal subunit. Contacts proteins S9 and S11.

Functionally, one of the primary rRNA binding proteins, it binds directly to 16S rRNA where it nucleates assembly of the head domain of the 30S subunit. Is located at the subunit interface close to the decoding center, probably blocks exit of the E-site tRNA. In Prochlorococcus marinus (strain MIT 9303), this protein is Small ribosomal subunit protein uS7.